Here is a 94-residue protein sequence, read N- to C-terminus: Small ribosomal subunit protein uS19 (94 aa).

This sequence belongs to the universal ribosomal protein uS19 family.

In terms of biological role, protein S19 forms a complex with S13 that binds strongly to the 16S ribosomal RNA. This Desulforamulus reducens (strain ATCC BAA-1160 / DSM 100696 / MI-1) (Desulfotomaculum reducens) protein is Small ribosomal subunit protein uS19.